The chain runs to 322 residues: Transcription factor WRKY45-2 (322 aa).

The interval 67–110 (GGEGSEVQSEVTCGGGASAGGKRKAPAANRKANCRRRTQQSSGN) is disordered. The segment at residues 112–180 (VVVKNLDDGQ…YIGEHTCRDP (69 aa)) is a DNA-binding region (WRKY). The disordered stretch occupies residues 256 to 284 (SDQEEVLSSLTPGSSAARGGGVAGPFGPD).

It belongs to the WRKY group III family. In terms of tissue distribution, expressed in aleurone cells.

Its subcellular location is the nucleus. Its function is as follows. Transcriptional activator involved in defense responses against pathogens. Acts as a positive regulator of defense responses against the rice blast fungus Magnaporthe oryzae. Acts as a positive regulator of defense responses against the bacterial blight Xanthomonas oryzae pv oryzae (Xoo) and the bacterial streak Xanthomonas oryzae pv oryzicola (Xoc). Acts as a positive regulator of abscisic acid (ABA) signaling that suppresses growth of seedlings. Acts as a negative regulator of salt stress response. Acts as a negative regulator of cold stress response. Acts as a negative regulator of drought stress response. This chain is Transcription factor WRKY45-2, found in Oryza sativa subsp. indica (Rice).